Reading from the N-terminus, the 332-residue chain is Ribosomal RNA small subunit methyltransferase H (332 aa).

S-adenosyl-L-methionine contacts are provided by residues 36 to 38, Asp-54, Phe-81, Asp-102, and Gln-109; that span reads GGY. The interval 297-318 is disordered; sequence ARSAKLRGAERTEAPAHAAGDL.

It belongs to the methyltransferase superfamily. RsmH family.

It localises to the cytoplasm. It carries out the reaction cytidine(1402) in 16S rRNA + S-adenosyl-L-methionine = N(4)-methylcytidine(1402) in 16S rRNA + S-adenosyl-L-homocysteine + H(+). Specifically methylates the N4 position of cytidine in position 1402 (C1402) of 16S rRNA. The protein is Ribosomal RNA small subunit methyltransferase H of Rhodopseudomonas palustris (strain TIE-1).